The sequence spans 291 residues: ATP synthase gamma chain (291 aa).

This sequence belongs to the ATPase gamma chain family. F-type ATPases have 2 components, CF(1) - the catalytic core - and CF(0) - the membrane proton channel. CF(1) has five subunits: alpha(3), beta(3), gamma(1), delta(1), epsilon(1). CF(0) has three main subunits: a, b and c.

The protein localises to the cell inner membrane. In terms of biological role, produces ATP from ADP in the presence of a proton gradient across the membrane. The gamma chain is believed to be important in regulating ATPase activity and the flow of protons through the CF(0) complex. The sequence is that of ATP synthase gamma chain from Sphingopyxis alaskensis (strain DSM 13593 / LMG 18877 / RB2256) (Sphingomonas alaskensis).